Consider the following 222-residue polypeptide: Small ribosomal subunit protein uS7m (222 aa).

Residues 1–14 (MSKKLANFAQKRWI) constitute a mitochondrion transit peptide.

It belongs to the universal ribosomal protein uS7 family. As to quaternary structure, component of the mitochondrial ribosome small subunit (28S) which comprises a 12S rRNA and about 30 distinct proteins.

It localises to the mitochondrion. The chain is Small ribosomal subunit protein uS7m (mrps-7) from Caenorhabditis briggsae.